We begin with the raw amino-acid sequence, 427 residues long: Serine hydroxymethyltransferase (427 aa).

(6S)-5,6,7,8-tetrahydrofolate contacts are provided by residues Leu-122 and 126-128 (GHL). Lys-231 is modified (N6-(pyridoxal phosphate)lysine).

The protein belongs to the SHMT family. In terms of assembly, homodimer. Pyridoxal 5'-phosphate serves as cofactor.

It is found in the cytoplasm. It catalyses the reaction (6R)-5,10-methylene-5,6,7,8-tetrahydrofolate + glycine + H2O = (6S)-5,6,7,8-tetrahydrofolate + L-serine. It functions in the pathway one-carbon metabolism; tetrahydrofolate interconversion. The protein operates within amino-acid biosynthesis; glycine biosynthesis; glycine from L-serine: step 1/1. Catalyzes the reversible interconversion of serine and glycine with tetrahydrofolate (THF) serving as the one-carbon carrier. This reaction serves as the major source of one-carbon groups required for the biosynthesis of purines, thymidylate, methionine, and other important biomolecules. Also exhibits THF-independent aldolase activity toward beta-hydroxyamino acids, producing glycine and aldehydes, via a retro-aldol mechanism. The chain is Serine hydroxymethyltransferase from Acidobacterium capsulatum (strain ATCC 51196 / DSM 11244 / BCRC 80197 / JCM 7670 / NBRC 15755 / NCIMB 13165 / 161).